The sequence spans 356 residues: MGSCQSNENSEGNARNKEIEKQLNADKRAGSSIVKLLLLGAGECGKSTVLKQMQILHSNGFTEEEVNEKRAIVYNNTVSAMCTILRAMDGVLHLPLENGQKEAEKAIVMKVQENGEEGEALTEEVSRAIQSLWADPGVKKAFEMRSEYQLPDSAKYFLDNCQRISEPGYRPNDQDILYSRVATTGVVEVKFKIKELDFRVFDVGGQRSERRKWIHCFDNVESIIFITAISEYDQVLFEDETTNRMIESMQLFNSICNSTWFLSTAMILFMNKKDLFMEKIQRVNITTAFPDYEGGQNYEEAVAFIKQKFAELNLNPDKKTIYMHETCATDTNQVQLVISSVIDTIIQKNLQKAGMM.

Residue G2 is the site of N-myristoyl glycine attachment. Residue C4 is the site of S-palmitoyl cysteine attachment. The G-alpha domain occupies 32–356 (SIVKLLLLGA…QKNLQKAGMM (325 aa)). Residues 35 to 48 (KLLLLGAGECGKST) are G1 motif. GTP contacts are provided by residues 40 to 47 (GAGECGKS), 177 to 183 (LYSRVAT), 202 to 206 (DVGGQ), 271 to 274 (NKKD), and A328. Residues S47 and T183 each coordinate Mg(2+). The interval 175–183 (DILYSRVAT) is G2 motif. The segment at 198 to 207 (FRVFDVGGQR) is G3 motif. A G4 motif region spans residues 267–274 (ILFMNKKD). The G5 motif stretch occupies residues 326–331 (TCATDT).

It belongs to the G-alpha family. As to quaternary structure, g proteins are composed of 3 units; alpha, beta and gamma. The alpha chain contains the guanine nucleotide binding site.

It localises to the cell projection. It is found in the cilium. The protein localises to the dendrite. In terms of biological role, guanine nucleotide-binding proteins (G proteins) are involved as modulators or transducers in various transmembrane signaling systems. This specific G-alpha subunit plays an important role in olfaction and in cilia morphogenesis. Involved in chemotactic responses to attractants diacetyl, pyrazine, 2,4,5-trimethylthiazole, benzaldehyde, isoamyl alcohol, butanone and 2,3-pentanedione. Displays a redundant function with gpa-3 in chemotactic responses. Involved in avoidance responses to copper, sodium dodecyl sulfate and linoleic acid. Involved in osmotic avoidance and mechanosensory responses. Involved in specifying fan-like morphology of cilia of head sensory neurons AWC. The chain is Guanine nucleotide-binding protein alpha-17 subunit (odr-3) from Caenorhabditis briggsae.